Consider the following 1026-residue polypeptide: Multidrug resistance protein MdtC (1026 aa).

The next 11 helical transmembrane spans lie at 16-36 (LLAL…PVAP), 333-353 (EVEQ…FLFL), 360-380 (LIPA…IYLC), 387-407 (LSLM…IVVL), 435-455 (VFSI…MGGI), 459-479 (LFHE…LIAL), 528-548 (WVLL…ISIP), 853-873 (LLLI…LYES), 897-917 (LFNA…IGLV), 953-973 (PILM…FSYG), and 984-1004 (ITIV…TPVV).

Belongs to the resistance-nodulation-cell division (RND) (TC 2.A.6) family. MdtC subfamily. In terms of assembly, part of a tripartite efflux system composed of MdtA, MdtB and MdtC. MdtC forms a heteromultimer with MdtB.

It localises to the cell inner membrane. The protein is Multidrug resistance protein MdtC of Edwardsiella ictaluri (strain 93-146).